The sequence spans 175 residues: B9 domain-containing protein 2 (175 aa).

The 117-residue stretch at 2–118 (AEVHVIGQIM…DCPTWRPLGS (117 aa)) folds into the C2 B9-type domain.

This sequence belongs to the B9D family. In terms of assembly, part of the tectonic-like complex (also named B9 complex). Interacts with TUBG1.

Its subcellular location is the cytoplasm. It is found in the cytoskeleton. It localises to the cilium basal body. The protein localises to the cilium axoneme. The protein resides in the nucleus. Its function is as follows. Component of the tectonic-like complex, a complex localized at the transition zone of primary cilia and acting as a barrier that prevents diffusion of transmembrane proteins between the cilia and plasma membranes. The sequence is that of B9 domain-containing protein 2 (B9D2) from Bos taurus (Bovine).